The primary structure comprises 193 residues: Phosphoheptose isomerase (193 aa).

An SIS domain is found at 37-193 (LADSFKAGGK…QLIEKEMVKA (157 aa)). 52–54 (NGG) contacts substrate. Residues histidine 61 and glutamate 65 each coordinate Zn(2+). Substrate-binding positions include glutamate 65, 93-94 (ND), 119-121 (STS), serine 124, and glutamine 172. Zn(2+) contacts are provided by glutamine 172 and histidine 180.

It belongs to the SIS family. GmhA subfamily. In terms of assembly, homotetramer. Zn(2+) serves as cofactor.

It is found in the cytoplasm. The catalysed reaction is 2 D-sedoheptulose 7-phosphate = D-glycero-alpha-D-manno-heptose 7-phosphate + D-glycero-beta-D-manno-heptose 7-phosphate. It participates in carbohydrate biosynthesis; D-glycero-D-manno-heptose 7-phosphate biosynthesis; D-glycero-alpha-D-manno-heptose 7-phosphate and D-glycero-beta-D-manno-heptose 7-phosphate from sedoheptulose 7-phosphate: step 1/1. Functionally, catalyzes the isomerization of sedoheptulose 7-phosphate in D-glycero-D-manno-heptose 7-phosphate. In Yersinia pseudotuberculosis serotype O:1b (strain IP 31758), this protein is Phosphoheptose isomerase.